The sequence spans 465 residues: G1/S-specific cyclin CLN2 (465 aa).

Belongs to the cyclin family.

Essential for the control of the cell cycle at the G1/S (start) transition. Interacts with the CDC28 protein kinase to form MPF. In Candida albicans (Yeast), this protein is G1/S-specific cyclin CLN2 (CLN2).